The sequence spans 248 residues: NAD kinase (248 aa).

D45 serves as the catalytic Proton acceptor. NAD(+)-binding positions include 45–46, R50, 110–111, and D138; these read DG and NE.

The protein belongs to the NAD kinase family. A divalent metal cation serves as cofactor.

The protein resides in the cytoplasm. It carries out the reaction NAD(+) + ATP = ADP + NADP(+) + H(+). Functionally, involved in the regulation of the intracellular balance of NAD and NADP, and is a key enzyme in the biosynthesis of NADP. Catalyzes specifically the phosphorylation on 2'-hydroxyl of the adenosine moiety of NAD to yield NADP. In Sulfurisphaera tokodaii (strain DSM 16993 / JCM 10545 / NBRC 100140 / 7) (Sulfolobus tokodaii), this protein is NAD kinase.